Consider the following 100-residue polypeptide: uncharacterized protein (100 aa).

An N-terminal signal peptide occupies residues 1–18 (MWGFLVLKARWLVTPVRT). A disordered region spans residues 48–86 (LTRGVIRVSPQERSQQNQSAPKGPTPSTRPKPRTLGPQA). A compositionally biased stretch (polar residues) spans 58–69 (QERSQQNQSAPK). Asn-64 carries N-linked (GlcNAc...) asparagine glycosylation.

The protein localises to the secreted. This is an uncharacterized protein from Homo sapiens (Human).